The chain runs to 460 residues: MGKEDKTHINVVVIGHVDSGKSTTTGHLIYKCGGIDKRTIEKFEKEAAELGKGSFKYAWVLDKLKAERERGITIDIALWKFETPKYYVTVIDAPGHRDFIKNMITGTSQADCAILIIAAGTGEFEAGISKDGQTREHALLAYTLGVKQLIVAINKMDTTKWSEARFNEIIKETSNFIKKVGYNPKTVAFVPISGFNGDNMLEASTNCPWYKGWEKEVKGGKATGKTLLEAIDSIEPPKRPTDKPLRLPLQDVYKIGGIGTVPVGRIETGILKPGMVVTFAPSNVTTEVKSVEMHHEQLAEGVPGDNVGFNVKNVSVKEIRRGNVAGDSKNDPPMGAASFDAQVIVLNHPGQVGAGYAPVLDCHTAHIACKFSELLQKIDRRTGKAVEESPKFIKSGDAAIVKMVPSKPMCVEAFTEYPPLGRFAVRDMRQTVAVGVIKKVEKAAAGSGKVTKSAAKAGKK.

The residue at position 2 (Gly-2) is a N,N,N-trimethylglycine. At Lys-3 the chain carries N6,N6-dimethyllysine; alternate. Lys-3 is modified (N6-methyllysine; alternate). Residues 6 to 241 (KTHINVVVIG…DSIEPPKRPT (236 aa)) form the tr-type G domain. A G1 region spans residues 15–22 (GHVDSGKS). Residue 15–22 (GHVDSGKS) participates in GTP binding. Lys-31 bears the N6-methyllysine mark. A G2 region spans residues 71–75 (GITID). Lys-80 is subject to N6,N6,N6-trimethyllysine. The segment at 92-95 (DAPG) is G3. Residues 92 to 96 (DAPGH) and 154 to 157 (NKMD) each bind GTP. The segment at 154-157 (NKMD) is G4. Positions 193-195 (SGF) are G5. Lys-317 carries the post-translational modification N6,N6-dimethyllysine; alternate. Position 317 is an N6-methyllysine; alternate (Lys-317). Position 391 is an N6-methyllysine (Lys-391).

It belongs to the TRAFAC class translation factor GTPase superfamily. Classic translation factor GTPase family. EF-Tu/EF-1A subfamily.

The protein localises to the cytoplasm. This protein promotes the GTP-dependent binding of aminoacyl-tRNA to the A-site of ribosomes during protein biosynthesis. The sequence is that of Elongation factor 1-alpha (TEF) from Podospora anserina (Pleurage anserina).